Here is a 106-residue protein sequence, read N- to C-terminus: Urease subunit beta (106 aa).

It belongs to the urease beta subunit family. Heterotrimer of UreA (gamma), UreB (beta) and UreC (alpha) subunits. Three heterotrimers associate to form the active enzyme.

The protein localises to the cytoplasm. The enzyme catalyses urea + 2 H2O + H(+) = hydrogencarbonate + 2 NH4(+). The protein operates within nitrogen metabolism; urea degradation; CO(2) and NH(3) from urea (urease route): step 1/1. The polypeptide is Urease subunit beta (Citrobacter koseri (strain ATCC BAA-895 / CDC 4225-83 / SGSC4696)).